An 812-amino-acid polypeptide reads, in one-letter code: Valine--tRNA ligase (812 aa).

Positions 46 to 56 (PTVSGQLHIGH) match the 'HIGH' region motif. Positions 536-540 (KMSKS) match the 'KMSKS' region motif. Lysine 539 contributes to the ATP binding site.

It belongs to the class-I aminoacyl-tRNA synthetase family. ValS type 2 subfamily. Monomer.

The protein localises to the cytoplasm. It catalyses the reaction tRNA(Val) + L-valine + ATP = L-valyl-tRNA(Val) + AMP + diphosphate. Catalyzes the attachment of valine to tRNA(Val). As ValRS can inadvertently accommodate and process structurally similar amino acids such as threonine, to avoid such errors, it has a 'posttransfer' editing activity that hydrolyzes mischarged Thr-tRNA(Val) in a tRNA-dependent manner. The polypeptide is Valine--tRNA ligase (Rickettsia akari (strain Hartford)).